The sequence spans 686 residues: ATP-dependent zinc metalloprotease FTSH 1, chloroplastic (686 aa).

The N-terminal 16 residues, 1–16 (MAPPCSISSASHLLIT), are a transit peptide targeting the chloroplast. Residues 173–193 (FLAFVGNLLFPFLAFAGLFFL) traverse the membrane as a helical segment. 272-279 (GPPGTGKT) serves as a coordination point for ATP. His-494 lines the Zn(2+) pocket. Glu-495 is a catalytic residue. Positions 498 and 575 each coordinate Zn(2+).

The protein in the N-terminal section; belongs to the AAA ATPase family. This sequence in the C-terminal section; belongs to the peptidase M41 family. Zn(2+) is required as a cofactor.

The protein resides in the plastid. Its subcellular location is the chloroplast thylakoid membrane. Probable ATP-dependent zinc metallopeptidase. This chain is ATP-dependent zinc metalloprotease FTSH 1, chloroplastic (FTSH1), found in Oryza sativa subsp. japonica (Rice).